The following is a 443-amino-acid chain: Autophagy-related protein 13 homolog (443 aa).

Disordered stretches follow at residues 232–283 (AKKR…EEDH) and 308–333 (ANGT…KEPT). The segment covering 240–253 (SVESATSAGSSTSR) has biased composition (polar residues). Positions 268–283 (EDSRHSDVQNSYEEDH) are enriched in basic and acidic residues. Over residues 308 to 325 (ANGTKKNSSSTCLNSPKS) the composition is skewed to polar residues.

Belongs to the ATG13 family. Metazoan subfamily. As to quaternary structure, interacts with unc-51 (via C-terminus). Interacts with lgg-1; the interaction is direct.

The protein resides in the cytoplasm. It localises to the cytosol. Its subcellular location is the preautophagosomal structure. The protein localises to the perikaryon. It is found in the cell projection. The protein resides in the axon. Its function is as follows. Component of the unc-51/atg-13 complex required for autophagosome formation. Required for the degradation of germ cell specific P-granule components such as sepa-1 by autophagy in somatic cells. This ensures exclusive localization of the P-granules in germ cells. May function downstream of the let-363 (Tor) signaling pathway to mediate sepa-1 degradation. Plays a role in survival during limited food availability. The sequence is that of Autophagy-related protein 13 homolog from Caenorhabditis elegans.